The following is a 696-amino-acid chain: Polyribonucleotide nucleotidyltransferase (696 aa).

The Mg(2+) site is built by Asp486 and Asp492. Positions 553-612 (PRITQKQIPKDRIGELIGPGGKMIRAIIEQSGSEISVDDSGKVTIASPSEESKEKAIAMI) constitute a KH domain. The region spanning 622-690 (GKIYDGVIKR…KMGKIDLSRK (69 aa)) is the S1 motif domain.

It belongs to the polyribonucleotide nucleotidyltransferase family. It depends on Mg(2+) as a cofactor.

The protein resides in the cytoplasm. It carries out the reaction RNA(n+1) + phosphate = RNA(n) + a ribonucleoside 5'-diphosphate. Its function is as follows. Involved in mRNA degradation. Catalyzes the phosphorolysis of single-stranded polyribonucleotides processively in the 3'- to 5'-direction. In Leptospira biflexa serovar Patoc (strain Patoc 1 / ATCC 23582 / Paris), this protein is Polyribonucleotide nucleotidyltransferase.